Consider the following 131-residue polypeptide: Small ribosomal subunit protein uS11 (131 aa).

It belongs to the universal ribosomal protein uS11 family. As to quaternary structure, part of the 30S ribosomal subunit. Interacts with proteins S7 and S18. Binds to IF-3.

In terms of biological role, located on the platform of the 30S subunit, it bridges several disparate RNA helices of the 16S rRNA. Forms part of the Shine-Dalgarno cleft in the 70S ribosome. The sequence is that of Small ribosomal subunit protein uS11 from Trichodesmium erythraeum (strain IMS101).